A 283-amino-acid polypeptide reads, in one-letter code: MRTQWPSPAKLNLFLYITGQRADGYHTLQTLFQFLDYGDTINIELRDDGDIRLLTPVEGVEHEDNLIVRAARLLMKTAADSGRLPTGSGANISIDKRLPMGGGLGGGSSNAATVLVALNHLWQCGLSMDELAEMGLTLGADVPVFVRGHAAFAEGVGEILTPVDPPEKWYLVAHPGVSIPTPVIFKDPELPRNTPKRSIETLLKCEFSNDCEVIARKRFREVDAVLSWLLEYAPSRLTGTGACVFAEFDTESEARQVLEQAPEWLNGFVAKGVNLSPLHRAML.

Residue Lys10 is part of the active site. 99–109 (PMGGGLGGGSS) contributes to the ATP binding site. Asp141 is a catalytic residue.

It belongs to the GHMP kinase family. IspE subfamily. As to quaternary structure, homodimer.

The catalysed reaction is 4-CDP-2-C-methyl-D-erythritol + ATP = 4-CDP-2-C-methyl-D-erythritol 2-phosphate + ADP + H(+). Its pathway is isoprenoid biosynthesis; isopentenyl diphosphate biosynthesis via DXP pathway; isopentenyl diphosphate from 1-deoxy-D-xylulose 5-phosphate: step 3/6. Catalyzes the phosphorylation of the position 2 hydroxy group of 4-diphosphocytidyl-2C-methyl-D-erythritol. This is 4-diphosphocytidyl-2-C-methyl-D-erythritol kinase from Escherichia coli O7:K1 (strain IAI39 / ExPEC).